The following is an 87-amino-acid chain: Small ribosomal subunit protein bS20 (87 aa).

This sequence belongs to the bacterial ribosomal protein bS20 family.

In terms of biological role, binds directly to 16S ribosomal RNA. In Alkaliphilus oremlandii (strain OhILAs) (Clostridium oremlandii (strain OhILAs)), this protein is Small ribosomal subunit protein bS20.